The primary structure comprises 129 residues: Cytochrome c3 (129 aa).

A signal peptide spans 1–22; it reads MRKLFFCGVLALAVAFALPVVA. His44, His47, Cys52, Cys55, His56, His57, Cys68, Cys73, His74, His92, Cys101, Cys104, His105, Cys122, Cys127, and His128 together coordinate heme c.

Post-translationally, binds 4 heme c groups per subunit.

It is found in the periplasm. Its function is as follows. Participates in sulfate respiration coupled with phosphorylation by transferring electrons from the enzyme dehydrogenase to ferredoxin. This chain is Cytochrome c3, found in Nitratidesulfovibrio vulgaris (strain ATCC 29579 / DSM 644 / CCUG 34227 / NCIMB 8303 / VKM B-1760 / Hildenborough) (Desulfovibrio vulgaris).